A 342-amino-acid chain; its full sequence is Probable dual-specificity RNA methyltransferase RlmN (342 aa).

Residue Glu91 is the Proton acceptor of the active site. The Radical SAM core domain occupies 97–327 (YKHGNSICVS…TTIRREMGAD (231 aa)). An intrachain disulfide couples Cys104 to Cys332. The [4Fe-4S] cluster site is built by Cys111, Cys115, and Cys118. Residues 158-159 (GE), Ser190, 213-215 (SLH), and Asn289 contribute to the S-adenosyl-L-methionine site. Cys332 serves as the catalytic S-methylcysteine intermediate.

It belongs to the radical SAM superfamily. RlmN family. The cofactor is [4Fe-4S] cluster.

It is found in the cytoplasm. It carries out the reaction adenosine(2503) in 23S rRNA + 2 reduced [2Fe-2S]-[ferredoxin] + 2 S-adenosyl-L-methionine = 2-methyladenosine(2503) in 23S rRNA + 5'-deoxyadenosine + L-methionine + 2 oxidized [2Fe-2S]-[ferredoxin] + S-adenosyl-L-homocysteine. It catalyses the reaction adenosine(37) in tRNA + 2 reduced [2Fe-2S]-[ferredoxin] + 2 S-adenosyl-L-methionine = 2-methyladenosine(37) in tRNA + 5'-deoxyadenosine + L-methionine + 2 oxidized [2Fe-2S]-[ferredoxin] + S-adenosyl-L-homocysteine. Functionally, specifically methylates position 2 of adenine 2503 in 23S rRNA and position 2 of adenine 37 in tRNAs. This is Probable dual-specificity RNA methyltransferase RlmN from Clostridium botulinum (strain Langeland / NCTC 10281 / Type F).